Consider the following 329-residue polypeptide: Beta-ketoacyl-[acyl-carrier-protein] synthase III (329 aa).

Active-site residues include C123 and H256. The segment at 257–261 (QANIR) is ACP-binding. N286 is a catalytic residue.

This sequence belongs to the thiolase-like superfamily. FabH family. In terms of assembly, homodimer.

It is found in the cytoplasm. The enzyme catalyses malonyl-[ACP] + acetyl-CoA + H(+) = 3-oxobutanoyl-[ACP] + CO2 + CoA. It functions in the pathway lipid metabolism; fatty acid biosynthesis. Its function is as follows. Catalyzes the condensation reaction of fatty acid synthesis by the addition to an acyl acceptor of two carbons from malonyl-ACP. Catalyzes the first condensation reaction which initiates fatty acid synthesis and may therefore play a role in governing the total rate of fatty acid production. Possesses both acetoacetyl-ACP synthase and acetyl transacylase activities. Its substrate specificity determines the biosynthesis of branched-chain and/or straight-chain of fatty acids. In Paraburkholderia phymatum (strain DSM 17167 / CIP 108236 / LMG 21445 / STM815) (Burkholderia phymatum), this protein is Beta-ketoacyl-[acyl-carrier-protein] synthase III.